The chain runs to 388 residues: Succinate--CoA ligase [ADP-forming] subunit beta (388 aa).

Residues 9–244 enclose the ATP-grasp domain; sequence KQLFAEYGLP…PSQDDPREAH (236 aa). ATP is bound by residues Lys-46, 53 to 55, Glu-99, Thr-102, and Glu-107; that span reads GRG. Mg(2+) contacts are provided by Asn-199 and Asp-213. Residues Asn-264 and 321-323 contribute to the substrate site; that span reads GIV.

The protein belongs to the succinate/malate CoA ligase beta subunit family. As to quaternary structure, heterotetramer of two alpha and two beta subunits. Mg(2+) serves as cofactor.

It catalyses the reaction succinate + ATP + CoA = succinyl-CoA + ADP + phosphate. It carries out the reaction GTP + succinate + CoA = succinyl-CoA + GDP + phosphate. The protein operates within carbohydrate metabolism; tricarboxylic acid cycle; succinate from succinyl-CoA (ligase route): step 1/1. Succinyl-CoA synthetase functions in the citric acid cycle (TCA), coupling the hydrolysis of succinyl-CoA to the synthesis of either ATP or GTP and thus represents the only step of substrate-level phosphorylation in the TCA. The beta subunit provides nucleotide specificity of the enzyme and binds the substrate succinate, while the binding sites for coenzyme A and phosphate are found in the alpha subunit. The protein is Succinate--CoA ligase [ADP-forming] subunit beta of Ectopseudomonas mendocina (strain ymp) (Pseudomonas mendocina).